Reading from the N-terminus, the 375-residue chain is Serpin B5 (375 aa).

N-linked (GlcNAc...) asparagine glycans are attached at residues Asn99, Asn133, Asn188, Asn298, and Asn361.

It belongs to the serpin family. Ov-serpin subfamily. As to quaternary structure, interacts with IRF6.

The protein localises to the secreted. It localises to the extracellular space. Tumor suppressor. It blocks the growth, invasion, and metastatic properties of mammary tumors. As it does not undergo the S (stressed) to R (relaxed) conformational transition characteristic of active serpins, it exhibits no serine protease inhibitory activity. This chain is Serpin B5 (Serpinb5), found in Rattus norvegicus (Rat).